Consider the following 399-residue polypeptide: Probable peptidoglycan glycosyltransferase FtsW (399 aa).

Residues 1–32 (MMAGFAQTTITKINQFYERWMPRLPAEMTARN) lie on the Cytoplasmic side of the membrane. Residues 33–53 (VLVFCVVCLLCIGSVMVASAS) traverse the membrane as a helical segment. Residues 54–72 (MPYAEYMHENPFHYVVRHA) are Periplasmic-facing. Residues 73 to 93 (ISIATAAIVAYLVYKVPLNVW) form a helical membrane-spanning segment. Topologically, residues 94-97 (FKNT) are cytoplasmic. Residues 98–118 (FSFWLITILLLLAVLVIGTEV) form a helical membrane-spanning segment. Topologically, residues 119–126 (NGSRRWIR) are periplasmic. Residues 127–147 (LAGFTLQPTEVAKVMMAIFTA) traverse the membrane as a helical segment. Topologically, residues 148–159 (DYVVRRAKEVRT) are cytoplasmic. The chain crosses the membrane as a helical span at residues 160 to 180 (HWKGLVRLSGVMAITVGLIIA). Over 181-183 (EPD) the chain is Periplasmic. The chain crosses the membrane as a helical span at residues 184-204 (LGATVVIVLMMVGIFFLAGAP). Residues 205 to 207 (PTQ) lie on the Cytoplasmic side of the membrane. A helical membrane pass occupies residues 208 to 228 (FAIMLGAVVMGIGFLILFEPY). Topologically, residues 229 to 292 (RLARAMSFTN…DFMLAVLGEE (64 aa)) are periplasmic. Residues 293-313 (FGFVGISIVIGLSFIMLACCI) form a helical membrane-spanning segment. The Cytoplasmic segment spans residues 314 to 327 (KIGHRALKHNFLRA). A helical membrane pass occupies residues 328 to 348 (GYLAYGISIIFLLQIIVNAGM). Residues 349 to 359 (NMGLMPTKGLT) lie on the Periplasmic side of the membrane. The helical transmembrane segment at 360–380 (LPFISYGGTSLMMCAAMISLI) threads the bilayer. The Cytoplasmic segment spans residues 381 to 399 (LRIDASTQEINPDREESNF).

Belongs to the SEDS family. FtsW subfamily.

The protein resides in the cell inner membrane. The enzyme catalyses [GlcNAc-(1-&gt;4)-Mur2Ac(oyl-L-Ala-gamma-D-Glu-L-Lys-D-Ala-D-Ala)](n)-di-trans,octa-cis-undecaprenyl diphosphate + beta-D-GlcNAc-(1-&gt;4)-Mur2Ac(oyl-L-Ala-gamma-D-Glu-L-Lys-D-Ala-D-Ala)-di-trans,octa-cis-undecaprenyl diphosphate = [GlcNAc-(1-&gt;4)-Mur2Ac(oyl-L-Ala-gamma-D-Glu-L-Lys-D-Ala-D-Ala)](n+1)-di-trans,octa-cis-undecaprenyl diphosphate + di-trans,octa-cis-undecaprenyl diphosphate + H(+). It participates in cell wall biogenesis; peptidoglycan biosynthesis. In terms of biological role, peptidoglycan polymerase that is essential for cell division. This is Probable peptidoglycan glycosyltransferase FtsW from Acinetobacter baylyi (strain ATCC 33305 / BD413 / ADP1).